The sequence spans 105 residues: Putative ferredoxin-3 (105 aa).

4Fe-4S ferredoxin-type domains follow at residues Tyr17 to Ile46 and Thr70 to Ala100. The [4Fe-4S] cluster site is built by Cys26, Cys29, Cys32, Cys36, Cys80, Cys83, Cys86, and Cys90.

[4Fe-4S] cluster serves as cofactor.

In terms of biological role, ferredoxins are iron-sulfur proteins that transfer electrons in a wide variety of metabolic reactions. The chain is Putative ferredoxin-3 (fdxB) from Sinorhizobium fredii (strain NBRC 101917 / NGR234).